Reading from the N-terminus, the 245-residue chain is Major prion protein (245 aa).

The signal sequence occupies residues 1-22; the sequence is MANLGCWMLVVFVATWSDLGLC. The segment at 23-222 is interaction with GRB2, ERI3 and SYN1; that stretch reads KKRPKPGGWN…ESQAYYQRGS (200 aa). The interval 25-102 is disordered; it reads RPKPGGWNTG…KPSKPKTSMK (78 aa). 4 repeat units span residues 51–59, 60–67, 68–75, and 76–83. Residues 51-83 form a 4 X 8 AA tandem repeats of P-H-G-G-G-W-G-Q region; that stretch reads PQGGGGWGQPHGGGWGQPHGGGWGQPHGGGWGQ. Residues 52 to 87 show a composition bias toward gly residues; it reads QGGGGWGQPHGGGWGQPHGGGWGQPHGGGWGQGGGT. 11 residues coordinate Cu(2+): Gly-54, Gly-55, His-61, Gly-62, Gly-63, His-69, Gly-70, Gly-71, His-77, Gly-78, and Gly-79. A compositionally biased stretch (basic residues) spans 90-101; sequence QWHKPSKPKTSM. Residues Cys-171 and Cys-206 are joined by a disulfide bond. 2 N-linked (GlcNAc...) asparagine glycosylation sites follow: Asn-173 and Asn-189. The GPI-anchor amidated serine moiety is linked to residue Ser-222. Residues 223–245 constitute a propeptide, removed in mature form; that stretch reads SMVLFSSPPVILLISFLIFLIVG.

This sequence belongs to the prion family. As to quaternary structure, monomer and homodimer. Has a tendency to aggregate into amyloid fibrils containing a cross-beta spine, formed by a steric zipper of superposed beta-strands. Soluble oligomers may represent an intermediate stage on the path to fibril formation. Copper binding may promote oligomerization. Interacts with GRB2, APP, ERI3/PRNPIP and SYN1. Mislocalized cytosolically exposed PrP interacts with MGRN1; this interaction alters MGRN1 subcellular location and causes lysosomal enlargement. Interacts with KIAA1191.

It localises to the cell membrane. It is found in the golgi apparatus. Functionally, its primary physiological function is unclear. Has cytoprotective activity against internal or environmental stresses. May play a role in neuronal development and synaptic plasticity. May be required for neuronal myelin sheath maintenance. May play a role in iron uptake and iron homeostasis. Soluble oligomers are toxic to cultured neuroblastoma cells and induce apoptosis (in vitro). Association with GPC1 (via its heparan sulfate chains) targets PRNP to lipid rafts. Also provides Cu(2+) or Zn(2+) for the ascorbate-mediated GPC1 deaminase degradation of its heparan sulfate side chains. The protein is Major prion protein (PRNP) of Cercopithecus diana (Diana monkey).